The following is a 190-amino-acid chain: Probable oligoribonuclease (190 aa).

Positions 19-181 constitute an Exonuclease domain; it reads MVWVDLEMTG…QDIEESIEEL (163 aa). Tyrosine 140 is a catalytic residue.

This sequence belongs to the oligoribonuclease family.

3'-to-5' exoribonuclease specific for small oligoribonucleotides. This Dictyostelium discoideum (Social amoeba) protein is Probable oligoribonuclease (rexo2-1).